We begin with the raw amino-acid sequence, 147 residues long: Ribonuclease 4 (147 aa).

A signal peptide spans 1–28; sequence MALQRTHSLLLLLLLTLLGLGLVQPSYG. Q29 carries the pyrrolidone carboxylic acid modification. Residues R35, H40, K68, N71, and T72 each contribute to the dUMP site. The active-site Proton acceptor is H40. 4 disulfides stabilise this stretch: C53/C109, C67/C120, C85/C135, and C92/C99. H144 functions as the Proton donor in the catalytic mechanism. F145 contacts dUMP.

This sequence belongs to the pancreatic ribonuclease family. As to expression, expressed in the cortical and medullary tubules of the kidney, and in the transitional epithelium of the urinary bladder (at protein level).

It localises to the secreted. Its function is as follows. Cleaves preferentially after uridine bases. Has antimicrobial activity against uropathogenic E.coli (UPEC). Probably contributes to urinary tract sterility. The protein is Ribonuclease 4 (RNASE4) of Homo sapiens (Human).